The following is a 119-amino-acid chain: Beta-2-microglobulin (119 aa).

The signal sequence occupies residues 1-20 (MARFVVVPLFVLLSLFGLEA). Residues 25 to 114 (PKIQVYSRYP…VTFSTPKTVK (90 aa)) enclose the Ig-like C1-type domain. Cysteines 45 and 100 form a disulfide.

The protein belongs to the beta-2-microglobulin family. Heterodimer of an alpha chain and a beta chain. Beta-2-microglobulin is the beta-chain of major histocompatibility complex class I molecules.

Its subcellular location is the secreted. In terms of biological role, component of the class I major histocompatibility complex (MHC). Involved in the presentation of peptide antigens to the immune system. The sequence is that of Beta-2-microglobulin (B2M) from Saguinus niger (Black tamarin).